The following is an 84-amino-acid chain: Subtilisin-chymotrypsin inhibitor WSCI (84 aa).

A signal peptide spans 1 to 12 (MSSVVKKPLGGN). The segment at 1-28 (MSSVVKKPLGGNTDTGDHHNQKTEWPEL) is disordered. The span at 15 to 25 (TGDHHNQKTEW) shows a compositional bias: basic and acidic residues.

As to quaternary structure, monomer.

The protein localises to the secreted. Functionally, inhibits B.lichenoformis subtilisin, B.subtilis subtilisin, bovine pancreatic alpha-chymotrypsin and porcine alpha-chymotrypsin with Ki of 3.92 nM, 5.70 nM, 7.24 nM and 9.35 nM respectively. B.lichenoformis subtilisin is inhibited with a molar ratio of 1:0.87. Also inhibits chymotrypsin-like activities from the digestive tracts of the insect larvae T.molitor, P.interpunctella and H.armigera. Does not inhibit bovine pancreatic trypsin, porcine pancreatic elastase, or human leukocyte elastase. The chain is Subtilisin-chymotrypsin inhibitor WSCI from Triticum aestivum (Wheat).